A 500-amino-acid chain; its full sequence is L-arabinose isomerase (500 aa).

4 residues coordinate Mn(2+): E306, E333, H350, and H450.

The protein belongs to the arabinose isomerase family. In terms of assembly, homohexamer. The cofactor is Mn(2+).

It catalyses the reaction beta-L-arabinopyranose = L-ribulose. Its pathway is carbohydrate degradation; L-arabinose degradation via L-ribulose; D-xylulose 5-phosphate from L-arabinose (bacterial route): step 1/3. Its function is as follows. Catalyzes the conversion of L-arabinose to L-ribulose. This is L-arabinose isomerase from Enterobacter sp. (strain 638).